A 759-amino-acid polypeptide reads, in one-letter code: MEIYTMKTNFLVLALSLCILLSSFHEVSCQDDGSGLSNLDLIERDYQDSVNALQGKDDEDQSAKIQSENQNNTTVTDKNTISLSLSDESEVGSVSDESVGRSSLLDQIKLEFEAHHNSINQAGSDGVKAESKDDDEELSAHRQKMLEEIEHEFEAASDSLKQLKTDDVNEGNDEEHSAKRQSLLEEIEREFEAATKELEQLKVNDFTGDKDDEEHSAKRKSMLEAIEREFEAAMEGIEALKVSDSTGSGDDEEQSAKRLSMLEEIEREFEAASKGLEQLRASDSTADNNEEEHAAKGQSLLEEIEREFEAATESLKQLQVDDSTEDKEHFTAAKRQSLLEEIEREFEAATKDLKQLNDFTEGSADDEQSAKRNKMLEDIEREFEAATIGLEQLKANDFSEGNNNEEQSAKRKSMLEEIEREFEAAIGGLKQIKVDDSRNLEEESAKRKIILEEMEREFEEAHSGINAKADKEESAKKQSGSAIPEVLGLGQSGGCSCSKQDEDSSIVIPTKYSIEDILSEESAVQGTETSSLTASLTQLVENHRKEKESLLGHRVLTSPSIASSTSESSATSETVETLRAKLNELRGLTARELVTRKDFGQILITAASFEELSSAPISYISRLAKYRNVIKEGLEASERVHIAQVRAKMLKEVATEKQTAVDTHFATAKKLAQEGDALFVKIFAIKKLLAKLEAEKESVDGKFKETVKELSHLLADASEAYEEYHGAVRKAKDEQAAEEFAKEATQSAEIIWVKFLSSL.

The first 29 residues, 1-29, serve as a signal peptide directing secretion; that stretch reads MEIYTMKTNFLVLALSLCILLSSFHEVSC. The segment at 55-74 is disordered; that stretch reads GKDDEDQSAKIQSENQNNTT. The segment covering 63–74 has biased composition (polar residues); sequence AKIQSENQNNTT. EFE repeat repeat units lie at residues 91–138, 139–176, 177–215, 216–254, 255–293, 294–329, 330–368, 369–407, 408–443, and 444–473; these read VGSV…DEEL, SAHR…DEEH, SAKR…DEEH, SAKR…DEEQ, SAKR…EEEH, AAKG…DKEH, FTAA…DDEQ, SAKR…NEEQ, SAKR…LEEE, and SAKR…DKEE. Residues 91 to 473 form a 10 X approximate EFE repeat region; the sequence is VGSVSDESVG…GINAKADKEE (383 aa). Coiled-coil stretches lie at residues 142 to 461 and 685 to 734; these read RQKM…FEEA and IKKL…AKDE. 4 disordered regions span residues 154–184, 200–219, 271–332, and 393–414; these read EAAS…QSLL, QLKV…SAKR, AASK…HFTA, and LKAN…RKSM.

Homomultimer. Interacts (via C-terminal domain) with GIP1, CSN1 (via N-terminal domain) and TSK (via TPR repeats). Post-translationally, binds calcium through the EFE repeats. In terms of tissue distribution, expressed preferentially in flowers and shoot apex.

The protein localises to the endoplasmic reticulum lumen. It is found in the nucleus envelope. The protein resides in the cytoplasm. Functionally, involved in seedling development in the dark. May be involved, when interacting with TSK, in the organization of spindle microtubules and may participate, when interacting with GIP1, in structural links between the nuclear envelope and the cytoskeleton. In Arabidopsis thaliana (Mouse-ear cress), this protein is TSK-associating protein 1 (TSA1).